The chain runs to 294 residues: Probable 2-(5''-triphosphoribosyl)-3'-dephosphocoenzyme-A synthase (294 aa).

Belongs to the CitG/MdcB family.

The catalysed reaction is 3'-dephospho-CoA + ATP = 2'-(5''-triphospho-alpha-D-ribosyl)-3'-dephospho-CoA + adenine. In Streptococcus pyogenes serotype M5 (strain Manfredo), this protein is Probable 2-(5''-triphosphoribosyl)-3'-dephosphocoenzyme-A synthase.